Consider the following 429-residue polypeptide: Histidine--tRNA ligase (429 aa).

Belongs to the class-II aminoacyl-tRNA synthetase family. In terms of assembly, homodimer.

The protein localises to the cytoplasm. The enzyme catalyses tRNA(His) + L-histidine + ATP = L-histidyl-tRNA(His) + AMP + diphosphate + H(+). The chain is Histidine--tRNA ligase from Streptococcus pneumoniae (strain JJA).